The primary structure comprises 249 residues: Small ribosomal subunit protein uS5 (249 aa).

A compositionally biased stretch (basic and acidic residues) spans 1-14 (MSAEAPKRQFGDRR). Residues 1–29 (MSAEAPKRQFGDRRRGGRRGGRRDGEEKG) form a disordered region. The S5 DRBM domain maps to 71-134 (LKDDVMKIRS…VIAKLSIIPI (64 aa)).

This sequence belongs to the universal ribosomal protein uS5 family. In terms of assembly, component of the small ribosomal subunit. Mature ribosomes consist of a small (40S) and a large (60S) subunit. The 40S subunit contains about 32 different proteins and 1 molecule of RNA (18S). The 60S subunit contains 45 different proteins and 3 molecules of RNA (25S, 5.8S and 5S).

It localises to the cytoplasm. Its function is as follows. Component of the ribosome, a large ribonucleoprotein complex responsible for the synthesis of proteins in the cell. The small ribosomal subunit (SSU) binds messenger RNAs (mRNAs) and translates the encoded message by selecting cognate aminoacyl-transfer RNA (tRNA) molecules. The large subunit (LSU) contains the ribosomal catalytic site termed the peptidyl transferase center (PTC), which catalyzes the formation of peptide bonds, thereby polymerizing the amino acids delivered by tRNAs into a polypeptide chain. The nascent polypeptides leave the ribosome through a tunnel in the LSU and interact with protein factors that function in enzymatic processing, targeting, and the membrane insertion of nascent chains at the exit of the ribosomal tunnel. RPS2 is important for the assembly and function of the 40S ribosomal subunitand is nvolved in nucleolar processing of pre-18S ribosomal RNA and ribosome assembly. The polypeptide is Small ribosomal subunit protein uS5 (RPS21) (Candida albicans (strain SC5314 / ATCC MYA-2876) (Yeast)).